The primary structure comprises 429 residues: Growth/differentiation factor 2 (429 aa).

The first 22 residues, 1-22 (MCPGALWVALPLLSLLAGSLQG), serve as a signal peptide directing secretion. A propeptide spanning residues 23–319 (KPLQSWGRGS…AGSTLARRKR (297 aa)) is cleaved from the precursor. N-linked (GlcNAc...) asparagine glycans are attached at residues Asn71 and Asn136. Residues 283-301 (VLKKLSKDGSTEAGESSHE) are compositionally biased toward basic and acidic residues. The disordered stretch occupies residues 283–308 (VLKKLSKDGSTEAGESSHEEDTDGHV). Disulfide bonds link Cys327–Cys393, Cys356–Cys426, and Cys360–Cys428. The interaction with ENG stretch occupies residues 402–416 (SVLYKDDMGVPTLKY).

Belongs to the TGF-beta family. As to quaternary structure, homodimer; disulfide-linked. Detected in extracellular fluid as mature homodimer, and in complex with its propeptide. Interacts with ACVRL1, BMPR2 and ACVR2B with high affinity (in vitro). Identified in a complex with ACVRL1 and ACVR2B. Has ten times lower affinity for ACVR2A (in vitro). Interacts with ENG, forming a heterotetramer with a 2:2 stoichiometry. Can form a heteromeric complex with ENG and ACVRL1. Interacts with type I receptor ACVR1. Post-translationally, a reversible disulfide bond can be formed between the two subunits in the homodimer; this has no effect on GDF2 activity. As to expression, detected in blood plasma (at protein level).

It localises to the secreted. Potent circulating inhibitor of angiogenesis. Signals through the type I activin receptor ACVRL1 but not other Alks. Signaling through SMAD1 in endothelial cells requires TGF-beta coreceptor endoglin/ENG. The sequence is that of Growth/differentiation factor 2 (GDF2) from Homo sapiens (Human).